The sequence spans 429 residues: Glutamate-1-semialdehyde 2,1-aminomutase (429 aa).

K265 is modified (N6-(pyridoxal phosphate)lysine).

It belongs to the class-III pyridoxal-phosphate-dependent aminotransferase family. HemL subfamily. In terms of assembly, homodimer. Pyridoxal 5'-phosphate serves as cofactor.

The protein resides in the cytoplasm. The enzyme catalyses (S)-4-amino-5-oxopentanoate = 5-aminolevulinate. It participates in porphyrin-containing compound metabolism; protoporphyrin-IX biosynthesis; 5-aminolevulinate from L-glutamyl-tRNA(Glu): step 2/2. The protein is Glutamate-1-semialdehyde 2,1-aminomutase of Shewanella piezotolerans (strain WP3 / JCM 13877).